Reading from the N-terminus, the 886-residue chain is Receptor-like kinase TMK2 (886 aa).

The signal sequence occupies residues Met1–Ser20. Topologically, residues Ser21–Lys460 are extracellular. The N-linked (GlcNAc...) asparagine glycan is linked to Asn41. Cys48 and Cys56 form a disulfide bridge. LRR repeat units lie at residues Ser59 to Leu83, Thr84 to Leu106, Lys107 to Gly129, Ser131 to Ala155, Ser157 to Gly179, Phe182 to Ser206, Val208 to Met232, Thr233 to Gly254, Leu255 to Leu279, and Ser281 to Pro302. Asn154, Asn167, and Asn202 each carry an N-linked (GlcNAc...) asparagine glycan. An N-linked (GlcNAc...) asparagine glycan is attached at Asn237. Asn298 carries N-linked (GlcNAc...) asparagine glycosylation. 2 disulfide bridges follow: Cys315–Cys323 and Cys353–Cys361. 3 LRR repeats span residues Gly363–Asp386, Phe387–Lys410, and Leu411–Thr438. 5 N-linked (GlcNAc...) asparagine glycosylation sites follow: Asn377, Asn394, Asn401, Asn432, and Asn437. Residues Ile461–Phe481 traverse the membrane as a helical segment. Residues Leu482–Arg886 are Cytoplasmic-facing. The Protein kinase domain occupies Phe547–Val827. ATP-binding positions include Leu553–Val561 and Lys575. Asp676 (proton acceptor) is an active-site residue.

The protein belongs to the protein kinase superfamily. Ser/Thr protein kinase family. As to expression, expressed in siliques and flowers.

It is found in the membrane. The catalysed reaction is L-seryl-[protein] + ATP = O-phospho-L-seryl-[protein] + ADP + H(+). It carries out the reaction L-threonyl-[protein] + ATP = O-phospho-L-threonyl-[protein] + ADP + H(+). Involved in auxin signal transduction and cell expansion and proliferation regulation. The chain is Receptor-like kinase TMK2 from Arabidopsis thaliana (Mouse-ear cress).